Here is a 254-residue protein sequence, read N- to C-terminus: Pimeloyl-[acyl-carrier protein] methyl ester esterase (254 aa).

The AB hydrolase-1 domain maps to Leu-14–Pro-242. Substrate-binding positions include Trp-20, Ser-82–Leu-83, and Phe-143–Gln-147. Ser-82 serves as the catalytic Nucleophile. Active-site residues include Asp-207 and His-235. Position 235 (His-235) interacts with substrate.

This sequence belongs to the AB hydrolase superfamily. Carboxylesterase BioH family. Monomer.

The protein localises to the cytoplasm. The enzyme catalyses 6-carboxyhexanoyl-[ACP] methyl ester + H2O = 6-carboxyhexanoyl-[ACP] + methanol + H(+). It participates in cofactor biosynthesis; biotin biosynthesis. Its function is as follows. The physiological role of BioH is to remove the methyl group introduced by BioC when the pimeloyl moiety is complete. It allows to synthesize pimeloyl-ACP via the fatty acid synthetic pathway through the hydrolysis of the ester bonds of pimeloyl-ACP esters. The chain is Pimeloyl-[acyl-carrier protein] methyl ester esterase from Aeromonas salmonicida (strain A449).